The following is a 119-amino-acid chain: Immunoglobulin heavy variable 3-49 (119 aa).

An N-terminal signal peptide occupies residues 1-19; the sequence is MEFGLSWVFLVAILKGVQC. Residues 20 to 44 form a framework-1 region; the sequence is EVQLVESGGGLVQPGRSLRLSCTAS. The region spanning 20 to 119 is the Ig-like domain; the sequence is EVQLVESGGG…EDTAVYYCTR (100 aa). A disulfide bridge links Cys41 with Cys117. A complementarity-determining-1 region spans residues 45-52; the sequence is GFTFGDYA. Residues 53–69 form a framework-2 region; it reads MSWVRQAPGKGLEWVGF. The tract at residues 70–79 is complementarity-determining-2; sequence IRSKAYGGTT. The segment at 80 to 117 is framework-3; sequence EYAASVKGRFTISRDDSKSIAYLQMNSLKTEDTAVYYC. Residues 118–119 are complementarity-determining-3; that stretch reads TR.

Immunoglobulins are composed of two identical heavy chains and two identical light chains; disulfide-linked.

It is found in the secreted. Its subcellular location is the cell membrane. V region of the variable domain of immunoglobulin heavy chains that participates in the antigen recognition. Immunoglobulins, also known as antibodies, are membrane-bound or secreted glycoproteins produced by B lymphocytes. In the recognition phase of humoral immunity, the membrane-bound immunoglobulins serve as receptors which, upon binding of a specific antigen, trigger the clonal expansion and differentiation of B lymphocytes into immunoglobulins-secreting plasma cells. Secreted immunoglobulins mediate the effector phase of humoral immunity, which results in the elimination of bound antigens. The antigen binding site is formed by the variable domain of one heavy chain, together with that of its associated light chain. Thus, each immunoglobulin has two antigen binding sites with remarkable affinity for a particular antigen. The variable domains are assembled by a process called V-(D)-J rearrangement and can then be subjected to somatic hypermutations which, after exposure to antigen and selection, allow affinity maturation for a particular antigen. The polypeptide is Immunoglobulin heavy variable 3-49 (Homo sapiens (Human)).